Reading from the N-terminus, the 1044-residue chain is Pre-mRNA-splicing factor ATP-dependent RNA helicase DHX16 (1044 aa).

Disordered stretches follow at residues 101–210 (EDSE…AYEE) and 374–394 (LQGN…QKES). Phosphoserine occurs at positions 103, 106, and 107. Residues 119–130 (QKKRKKRKHLRK) are compositionally biased toward basic residues. Positions 134–143 (EEEEEEEEEA) are enriched in acidic residues. A Phosphoserine modification is found at Ser163. Basic and acidic residues predominate over residues 169–210 (RTERERLQDLEERDAFAERVRQRDKDRTRNVLERSDKKAYEE). The Helicase ATP-binding domain occupies 412–576 (LAAIANHQVL…FDDAPVFRIP (165 aa)). An ATP-binding site is contributed by 425-432 (GETGSGKT). The DEAH box motif lies at 523–526 (DEAH). Residues 601–774 (SVLQIHVTQP…NVVLLLKSLG (174 aa)) enclose the Helicase C-terminal domain. Thr715 carries the post-translational modification Phosphothreonine.

It belongs to the DEAD box helicase family. DEAH subfamily. DDX16/PRP8 sub-subfamily. Component of pre-catalytic spliceosome complexes. Component of the minor spliceosome, which splices U12-type introns. Interacts with GPKOW. Interacts with TRIM6. Interacts with RIGI.

The protein localises to the nucleus. It is found in the nucleoplasm. The protein resides in the cytoplasm. The enzyme catalyses ATP + H2O = ADP + phosphate + H(+). In terms of biological role, required for pre-mRNA splicing as a component of the spliceosome. Contributes to pre-mRNA splicing after spliceosome formation and prior to the first transesterification reaction. As a component of the minor spliceosome, involved in the splicing of U12-type introns in pre-mRNAs. Also plays a role in innate antiviral response by acting as a pattern recognition receptor sensing splicing signals in viral RNA. Mechanistically, TRIM6 promotes the interaction between unanchored 'Lys-48'-polyubiquitin chains and DHX16, leading to DHX16 interaction with RIGI and ssRNA to amplify RIGI-dependent innate antiviral immune responses. This chain is Pre-mRNA-splicing factor ATP-dependent RNA helicase DHX16 (DHX16), found in Pan troglodytes (Chimpanzee).